The chain runs to 456 residues: Gamma-glutamyl phosphate reductase (456 aa).

N-acetylserine is present on serine 2.

Belongs to the gamma-glutamyl phosphate reductase family.

It catalyses the reaction L-glutamate 5-semialdehyde + phosphate + NADP(+) = L-glutamyl 5-phosphate + NADPH + H(+). The protein operates within amino-acid biosynthesis; L-proline biosynthesis; L-glutamate 5-semialdehyde from L-glutamate: step 2/2. Its function is as follows. Catalyzes the NADPH dependent reduction of L-gamma-glutamyl 5-phosphate into L-glutamate 5-semialdehyde and phosphate. The product spontaneously undergoes cyclization to form 1-pyrroline-5-carboxylate. This Saccharomyces cerevisiae (strain ATCC 204508 / S288c) (Baker's yeast) protein is Gamma-glutamyl phosphate reductase (PRO2).